The following is a 337-amino-acid chain: Glyceraldehyde-3-phosphate dehydrogenase (337 aa).

NAD(+) contacts are provided by residues 12–13 (RI), aspartate 34, and arginine 79. Residues 150–152 (SCT), threonine 181, 210–211 (TG), and arginine 233 contribute to the D-glyceraldehyde 3-phosphate site. The active-site Nucleophile is the cysteine 151. Position 315 (asparagine 315) interacts with NAD(+).

The protein belongs to the glyceraldehyde-3-phosphate dehydrogenase family. In terms of assembly, homotetramer.

The protein localises to the cytoplasm. It carries out the reaction D-glyceraldehyde 3-phosphate + phosphate + NAD(+) = (2R)-3-phospho-glyceroyl phosphate + NADH + H(+). The protein operates within carbohydrate degradation; glycolysis; pyruvate from D-glyceraldehyde 3-phosphate: step 1/5. The protein is Glyceraldehyde-3-phosphate dehydrogenase (GPD-1) of Claviceps purpurea (strain 20.1) (Ergot fungus).